Reading from the N-terminus, the 189-residue chain is Probable DNA-directed RNA polymerase subunit delta (189 aa).

Positions Leu14 to Trp81 constitute an HTH HARE-type domain. Acidic residues-rich tracts occupy residues Glu90–Glu100 and Glu118–Glu189. The interval Glu90 to Glu189 is disordered.

It belongs to the RpoE family. RNAP is composed of a core of 2 alpha, a beta and a beta' subunits. The core is associated with a delta subunit and one of several sigma factors.

Functionally, participates in both the initiation and recycling phases of transcription. In the presence of the delta subunit, RNAP displays an increased specificity of transcription, a decreased affinity for nucleic acids, and an increased efficiency of RNA synthesis because of enhanced recycling. This Lactobacillus delbrueckii subsp. bulgaricus (strain ATCC BAA-365 / Lb-18) protein is Probable DNA-directed RNA polymerase subunit delta.